The chain runs to 190 residues: FUN14 domain-containing protein 2 (190 aa).

Over residues 1 to 13 (METSTQRTGSHLA) the composition is skewed to polar residues. Residues 1–31 (METSTQRTGSHLAQTAAARHSASSRGEAARV) are disordered. Over 1-81 (METSTQRTGS…GQESGPSAEK (81 aa)) the chain is Cytoplasmic. Phosphoserine occurs at positions 10 and 54. Residues 82 to 102 (YSVATQLLIGGVTGWCTGFIF) form a helical membrane-spanning segment. The Mitochondrial intermembrane segment spans residues 103 to 108 (QKVGKL). A helical membrane pass occupies residues 109–129 (AATAVGGGFFLLQLANHTGYI). Over 130–165 (KVDWQRVEKDMKKAKEQLKIRKSNQIPTEVKSKAEE) the chain is Cytoplasmic. A Phosphoserine modification is found at Ser-152. A helical transmembrane segment spans residues 166 to 186 (VVSFVKKNVLVTGGFFGGFLL). Residues 187–190 (GMAS) are Mitochondrial intermembrane-facing.

Belongs to the FUN14 family.

Its subcellular location is the mitochondrion outer membrane. It localises to the nucleus. In terms of biological role, binds directly and specifically 1,2-Diacyl-sn-glycero-3-phospho-(1'-myo-inositol-3',4',5'-bisphosphate) (PIP3) leading to the recruitment of PIP3 to mitochondria and may play a role in the regulation of the platelet activation via AKT/GSK3B/cGMP signaling pathways. May act as transcription factor that regulates SREBP1 (isoform SREBP-1C) expression in order to modulate triglyceride (TG) homeostasis in hepatocytes. This Bos taurus (Bovine) protein is FUN14 domain-containing protein 2.